The chain runs to 1136 residues: Coiled-coil domain-containing protein 136 (1136 aa).

The segment at 1–46 is disordered; it reads MQAMDGEVLLPALYEEEEEEEEEEEEVEEEQVEKGGSLGSLSMGKH. Acidic residues predominate over residues 14 to 31; it reads YEEEEEEEEEEEEVEEEQ. At Ser50 the chain carries Phosphoserine. Coiled coils occupy residues 293–631 and 681–730; these read VMQL…QNQE and LQAL…QTQS. Disordered regions lie at residues 741–773, 814–837, 965–990, and 1040–1111; these read GKNS…KSYV, GSVS…DPAE, NRPS…NGVR, and KKER…PDPP. The segment covering 743–752 has biased composition (polar residues); that stretch reads NSGSRAPSTE. Residues 839-972 are a coiled coil; it reads EDLEHFEETV…KENRPSISSE (134 aa). Low complexity predominate over residues 976-989; that stretch reads KNVNKNMNKNANGV. The stretch at 1017-1057 forms a coiled coil; the sequence is YYKASQRRLDELMKEEKEIEEARKKEREKKAKKDLCKLATN. The span at 1040 to 1052 shows a compositional bias: basic and acidic residues; sequence KKEREKKAKKDLC. A compositionally biased stretch (acidic residues) spans 1067-1091; it reads EPTEDEEENFEEYREGEDESCEAAE. The helical transmembrane segment at 1112–1132 threads the bilayer; sequence IFSLPLVGLVVISALLWCWWA.

Present at high level in testis (at protein level).

The protein localises to the cytoplasmic vesicle. Its subcellular location is the secretory vesicle. The protein resides in the acrosome membrane. In terms of biological role, may play a role in acrosome formation in spermatogenesis and in fertilization. This Mus musculus (Mouse) protein is Coiled-coil domain-containing protein 136 (Ccdc136).